The primary structure comprises 81 residues: Small ribosomal subunit protein bS16 (81 aa).

The protein belongs to the bacterial ribosomal protein bS16 family.

The sequence is that of Small ribosomal subunit protein bS16 from Clostridium beijerinckii (strain ATCC 51743 / NCIMB 8052) (Clostridium acetobutylicum).